A 440-amino-acid chain; its full sequence is Xylose isomerase (440 aa).

Residues His-100 and Asp-103 contribute to the active site. Mg(2+) is bound by residues Glu-231, Glu-267, His-270, Asp-295, Asp-306, Asp-308, and Asp-338.

The protein belongs to the xylose isomerase family. As to quaternary structure, homotetramer. Mg(2+) serves as cofactor.

It is found in the cytoplasm. The enzyme catalyses alpha-D-xylose = alpha-D-xylulofuranose. This Burkholderia cenocepacia (strain HI2424) protein is Xylose isomerase.